A 265-amino-acid chain; its full sequence is 4-diphosphocytidyl-2-C-methyl-D-erythritol kinase (265 aa).

K8 is a catalytic residue. Residue 95-105 (PIGAGLGGGSS) coordinates ATP. D135 is a catalytic residue.

Belongs to the GHMP kinase family. IspE subfamily.

The enzyme catalyses 4-CDP-2-C-methyl-D-erythritol + ATP = 4-CDP-2-C-methyl-D-erythritol 2-phosphate + ADP + H(+). Its pathway is isoprenoid biosynthesis; isopentenyl diphosphate biosynthesis via DXP pathway; isopentenyl diphosphate from 1-deoxy-D-xylulose 5-phosphate: step 3/6. Functionally, catalyzes the phosphorylation of the position 2 hydroxy group of 4-diphosphocytidyl-2C-methyl-D-erythritol. The sequence is that of 4-diphosphocytidyl-2-C-methyl-D-erythritol kinase from Ureaplasma urealyticum serovar 10 (strain ATCC 33699 / Western).